The following is a 235-amino-acid chain: tRNA pseudouridine synthase B (235 aa).

Catalysis depends on aspartate 45, which acts as the Nucleophile.

This sequence belongs to the pseudouridine synthase TruB family. Type 1 subfamily.

The catalysed reaction is uridine(55) in tRNA = pseudouridine(55) in tRNA. Functionally, responsible for synthesis of pseudouridine from uracil-55 in the psi GC loop of transfer RNAs. The polypeptide is tRNA pseudouridine synthase B (Chlamydia pneumoniae (Chlamydophila pneumoniae)).